A 293-amino-acid chain; its full sequence is Nucleotide-binding protein BC_5156 (293 aa).

Position 14 to 21 (14 to 21) interacts with ATP; sequence GMSGAGKT. 65–68 serves as a coordination point for GTP; the sequence is DLRG.

The protein belongs to the RapZ-like family.

Its function is as follows. Displays ATPase and GTPase activities. The sequence is that of Nucleotide-binding protein BC_5156 from Bacillus cereus (strain ATCC 14579 / DSM 31 / CCUG 7414 / JCM 2152 / NBRC 15305 / NCIMB 9373 / NCTC 2599 / NRRL B-3711).